The primary structure comprises 71 residues: uncharacterized protein (71 aa).

The disordered stretch occupies residues 1-20 (MQKLNKHLKKKKQKRKKMKK).

This is an uncharacterized protein from Methanocaldococcus jannaschii (strain ATCC 43067 / DSM 2661 / JAL-1 / JCM 10045 / NBRC 100440) (Methanococcus jannaschii).